The chain runs to 405 residues: MADLLPEHPEFLWANPEPKKSYDVVIVGGGGHGLATAYYLAKNHGITNVAVLEKGWLAGGNMARNTTIIRSNYLWDESAGIYEKSLKLWEQLPEELDYDFLFSQRGVLNLAHTLGDVRESIRRVEANKFNGVDAEWLTPEQVKEVCPIINIGDDIRYPVMGATYQPRAGIAKHDHVAWAFARKANEMGVDIIQNCEVTGFLKDGEKVTGVKTTRGTIHAGKVALAGAGHSSVLAELAGFELPIQSHPLQALVSELFEPVHPTVVMSNHIHVYVSQAHKGELVMGAGIDTYNGYGQRGAFHVIEEQMAAAVELFPIFARAHVLRTWGGIVDTTMDALPIISKTPIQNLYVNCGWGTGGFKGTPGAGFTLAHTIANDEAHALNAPFSLERFETGHLIDEHGAAAVAH.

The FAD site is built by Gly31, His32, Glu53, Asn61, Met62, Thr66, and Ile68. Residue His173 is modified to Tele-8alpha-FMN histidine. Val197, Gly354, Gly357, and Lys359 together coordinate FAD.

It belongs to the SoxB family. Heterotetramer composed of subunits alpha (SoxA), beta (SoxB), gamma (SoxG) and delta (SoxD). The cofactor is FAD. Requires FMN as cofactor.

The protein resides in the cytoplasm. It carries out the reaction sarcosine + (6S)-5,6,7,8-tetrahydrofolate + O2 = (6R)-5,10-methylene-5,6,7,8-tetrahydrofolate + glycine + H2O2. The catalysed reaction is sarcosine + O2 + H2O = formaldehyde + glycine + H2O2. Functionally, in the presence of tetrahydrofolate, catalyzes the oxidative demethylation of sarcosine to yield glycine, 5,10-methylenetetrahydrofolate and hydrogen peroxide. In the absence of tetrahydrofolate, catalyzes the oxidative demethylation of sarcosine to yield glycine, formaldehyde and hydrogen peroxide. The chain is Sarcosine oxidase subunit beta (soxB) from Arthrobacter sp.